The following is a 203-amino-acid chain: Large ribosomal subunit protein bL25 (203 aa).

This sequence belongs to the bacterial ribosomal protein bL25 family. CTC subfamily. In terms of assembly, part of the 50S ribosomal subunit; part of the 5S rRNA/L5/L18/L25 subcomplex. Contacts the 5S rRNA. Binds to the 5S rRNA independently of L5 and L18.

Its function is as follows. This is one of the proteins that binds to the 5S RNA in the ribosome where it forms part of the central protuberance. The protein is Large ribosomal subunit protein bL25 of Paraburkholderia phymatum (strain DSM 17167 / CIP 108236 / LMG 21445 / STM815) (Burkholderia phymatum).